The following is a 361-amino-acid chain: Caveolae-associated protein 4 (361 aa).

A disordered region spans residues 1–21 (MEHNGSASNADKIHQNRLSNV). Residues 100–124 (IKDVKARVEKQQTHVKKVEAKQEEI) adopt a coiled-coil conformation. Residues S152, S171, and S172 each carry the phosphoserine modification. A coiled-coil region spans residues 204–248 (ENMQKTRQNFDKKVNRIRTRIVTPERRERLRQSGERLRQSGERLK). The segment covering 230 to 255 (RERLRQSGERLRQSGERLKQSGERFK) has biased composition (basic and acidic residues). 2 disordered regions span residues 230–283 (RERL…AVAE) and 310–346 (PEALSETDPEEASATHPPQEGGEVSTPEPLKVTFKPQ). The residue at position 335 (T335) is a Phosphothreonine. A Phosphoserine modification is found at S354.

Belongs to the CAVIN family. In terms of assembly, component of the CAVIN complex composed of CAVIN1, CAVIN2, CAVIN3 and CAVIN4. Interacts with CAVIN1, ADRA1A, ADRA1B, MAPK1 and MAPK3. Interacts with CAVIN2; this augments the transactivation of NPPA.

Its subcellular location is the cytoplasm. It is found in the myofibril. The protein resides in the sarcomere. It localises to the cytosol. The protein localises to the cell membrane. Its subcellular location is the sarcolemma. It is found in the membrane. The protein resides in the caveola. Functionally, modulates the morphology of formed caveolae in cardiomyocytes, but is not required for caveolar formation. Facilitates the recruitment of MAPK1/3 to caveolae within cardiomyocytes and regulates alpha-1 adrenergic receptor-induced hypertrophic responses in cardiomyocytes through MAPK1/3 activation. Contributes to proper membrane localization and stabilization of caveolin-3 (CAV3) in cardiomyocytes. Induces RHOA activation and activates NPPA transcription and myofibrillar organization through the Rho/ROCK signaling pathway. The polypeptide is Caveolae-associated protein 4 (CAVIN4) (Bos taurus (Bovine)).